A 149-amino-acid polypeptide reads, in one-letter code: MKRFLLATCLVAALLWEAGAAPAHQVPVKTKGKHVFPEQETEKVWDTRALEPLEKDNQLGPLLPEPKQKPAAAEEKRPDAMTWVETEDILSHLRSPLQGPELDLDSIDHPMSDDVQDEEVPQSRPILYRQVLQGPEEDLDHLAHSMEDS.

A signal peptide spans 1–20 (MKRFLLATCLVAALLWEAGA). Disordered stretches follow at residues 51–79 (EPLEKDNQLGPLLPEPKQKPAAAEEKRPD) and 97–122 (LQGPELDLDSIDHPMSDDVQDEEVPQ). A compositionally biased stretch (basic and acidic residues) spans 66–79 (PKQKPAAAEEKRPD).

Interacts with MTTP. Interacts with MAD1L1. Predominantly expressed in the intestinal epithelial cells than in the liver (at protein level). Abundantly expressed in the uterus during late pregnancy by uterus epithelial cells. After birth expression rapidly decreases and is no longer found in the uterus by the third day. Also highly expressed in the small intestine where it shows a proximal-distal graded expression.

The protein resides in the secreted. Its subcellular location is the endoplasmic reticulum. Functionally, lipid-binding protein which promotes lipid absorption by facilitating MTTP-mediated lipid transfer (mainly triglycerides and phospholipids) and MTTP-mediated apoB lipoprotein assembly and secretion. Protects the gastrointestinal epithelium from irradiation-induced apoptosis. May play an important role in maintaining normal growth homeostasis in epithelial cells. Involved in p53/TP53-dependent cell survival after DNA damage. The chain is Proline-rich acidic protein 1 (Prap1) from Mus musculus (Mouse).